A 571-amino-acid chain; its full sequence is Carboxylesterase 3B (571 aa).

The N-terminal stretch at 1–31 (MTNMRTMIPAGSSVLVWVTCLLLAFVTTVTG) is a signal peptide. The cysteines at positions 100 and 127 are disulfide-linked. The active-site Acyl-ester intermediate is Ser-232. Cysteines 284 and 295 form a disulfide. An N-linked (GlcNAc...) asparagine glycan is attached at Asn-311. Catalysis depends on charge relay system residues Glu-347 and His-460. Positions 568 to 571 (PEEL) match the Prevents secretion from ER motif.

The protein belongs to the type-B carboxylesterase/lipase family.

Its subcellular location is the endoplasmic reticulum lumen. It catalyses the reaction a carboxylic ester + H2O = an alcohol + a carboxylate + H(+). Functionally, involved in the detoxification of xenobiotics and in the activation of ester and amide prodrugs. The sequence is that of Carboxylesterase 3B (Ces3b) from Mus musculus (Mouse).